A 69-amino-acid polypeptide reads, in one-letter code: U2-agatoxin-Ao1z (69 aa).

The signal sequence occupies residues M1–A20. Residues V21–R34 constitute a propeptide that is removed on maturation. 3 cysteine pairs are disulfide-bonded: C37–C53, C44–C58, and C52–C68.

This sequence belongs to the neurotoxin 01 (U2-agtx) family. In terms of tissue distribution, expressed by the venom gland.

It is found in the secreted. Functionally, insect active toxin causing rapid but reversible paralysis in crickets. No activity shown in mammals. Does not show effect on mammalian voltage-gated calcium channels. The polypeptide is U2-agatoxin-Ao1z (Agelena orientalis (Funnel-web spider)).